Consider the following 468-residue polypeptide: Mitochondrial dynamics protein MID51 (468 aa).

Residues 1–29 are Mitochondrial intermembrane-facing; sequence MAGVNGDRKGKKDDNGLGTAIDFVLSNAK. The helical transmembrane segment at 30 to 47 threads the bilayer; sequence LVLGVGGAAMLGIATLAV. Topologically, residues 48 to 468 are cytoplasmic; the sequence is KRMYDRALSA…SDPESLLRTV (421 aa). The dimerization stretch occupies residues 50–196; that stretch reads MYDRALSAPS…LSGSLYDDLQ (147 aa). Positions 56-123 are disordered; the sequence is SAPSSPTKAD…RGLARGGRPA (68 aa). The span at 91–108 shows a compositional bias: polar residues; sequence QNVSRSLQTLPTSSSSFK. Residues 161–170 are important for interaction with DNM1L; the sequence is AALDICAELR. 3 residues coordinate ADP: Ser188, Ser190, and His202. Positions 235-244 are important for interaction with DNM1L; that stretch reads RRENLEYFPR. Ser344, Arg346, and Lys372 together coordinate ADP.

Belongs to the MID49/MID51 family. Homodimer.

It localises to the mitochondrion outer membrane. Functionally, mitochondrial outer membrane protein which regulates mitochondrial fission/fusion dynamics. Promotes the recruitment and association of the fission mediator dynamin-related protein 1 (DNM1L) to the mitochondrial surface independently of the mitochondrial fission FIS1 and MFF proteins. Regulates DNM1L GTPase activity and DNM1L oligomerization. This chain is Mitochondrial dynamics protein MID51 (mief1), found in Danio rerio (Zebrafish).